The chain runs to 245 residues: Hydrolase pyvD (245 aa).

Catalysis depends on residues Cys133, Asp179, and His211.

Belongs to the dienelactone hydrolase family.

It functions in the pathway secondary metabolite biosynthesis. Its function is as follows. Hydrolase; part of the gene cluster that mediates the biosynthesis of pyranoviolin A, a pyranonigrin analog with a C-3 methoxy group. Initially, the PKS portion of pyvA synthesizes C-10 carbon chain from 5 molecules of malonyl-CoA, which is then condensed with the thiolation (T) domain-bound glycine activated by the adenylation (A) domain. The subsequent chain release by Dieckmann condensation (DKC) could be catalyzed by the TE domain present at the C-terminus of pyvA and/or the alpha/beta hydrolase pyvD, installing the tetramic acid moiety. The FAD-dependent monooxygenase pyvC next epoxidizes one of the olefins of the polyketide part, and the epoxide ring-opening induces the dihydro-gamma-pyrone ring formation. The cytochrome P450 monooxygeanse pyvB would be responsible for the 2 consecutive reactions, in which the dihydro-gamma-pyrone is oxidized to gamma-pyrone and C-7 is hydroxylated to yield pyranonigrin F. Finally, the O-methyltransferase pyvH methylates the C-3 hydroxy group to complete the biosynthesis. This is Hydrolase pyvD from Aspergillus violaceofuscus (strain CBS 115571).